Here is a 638-residue protein sequence, read N- to C-terminus: MAPKPPAGTSSRAWDGVSPSLSEWVLEAVSSMGFTRMTPVQASAIPLFMAHKDVVVEAVTGSGKTLSFLIPIVEKLLRLEEPIKKHHVGAIIISPTRELASQIYHVLLSLLAFHPPSASVINPSEDDDVPRQKFPSSTLKVVPQLLLGGSTTPAEDLSKFLKQSPNLLVSTPGRLLELLSSPHVHCPQSSFEMLVLDEADRLLDLGFKETLQNIIRRLPKQRRTGLFSASISEAVDQIVRVGLRNPVKVMVKVKGTSGAQDKRTPASLQMTYLTTPTIHKFDALKHILHSVDPTPQKTIFFASTCSGVDYLSAILPLILGDDFQLISLHGKHPANVREKNFNRFVNSYSPAILLTTDVASRGLDIPSVDLVVQIDPPSDPKTFIHRCGRAGRAGRRGLSVVLLHPGREEDYVSFLEVRKTPVAPFPHPISFSESEATAATKAVRKAVLADRALHDRGQKAFVSWLRSYSKHQASSIFRVADLDWESLGKAWGLLKLPKMPELRNFTGDRTLGVNLDWDDYKYKDKQREKRRIELLQESKEGDGTQESSNKRKATETTAWSNKLDDRNKKQKRREQKQRRQEKNKWEKMTEEERQKIRETEQMVESIRVKNEEERRLRRAGKAEAANAGKDEEEFEGFD.

Positions 14 to 42 (WDGVSPSLSEWVLEAVSSMGFTRMTPVQA) match the Q motif motif. The region spanning 45–249 (IPLFMAHKDV…RVGLRNPVKV (205 aa)) is the Helicase ATP-binding domain. 58 to 65 (AVTGSGKT) is an ATP binding site. The DEAD box motif lies at 197 to 200 (DEAD). Residues 283-437 (ALKHILHSVD…PISFSESEAT (155 aa)) form the Helicase C-terminal domain. 2 stretches are compositionally biased toward basic and acidic residues: residues 534–554 (LLQESKEGDGTQESSNKRKAT) and 577–615 (QRRQEKNKWEKMTEEERQKIRETEQMVESIRVKNEEERR). Positions 534-638 (LLQESKEGDG…KDEEEFEGFD (105 aa)) are disordered. A coiled-coil region spans residues 566 to 619 (RNKKQKRREQKQRRQEKNKWEKMTEEERQKIRETEQMVESIRVKNEEERRLRRA).

This sequence belongs to the DEAD box helicase family. DDX55/SPB4 subfamily. Component of pre-60S ribosomal complexes.

It is found in the nucleus. The protein localises to the nucleolus. It catalyses the reaction ATP + H2O = ADP + phosphate + H(+). Functionally, ATP-binding RNA helicase involved in the biogenesis of 60S ribosomal subunits. Binds 90S pre-ribosomal particles and dissociates from pre-60S ribosomal particles after processing of 27SB pre-rRNA. Required for the normal formation of 18S rRNA through the processing of pre-rRNAs at sites A0, A1 and A2, and the normal formation of 25S and 5.8S rRNAs through the processing of pre-rRNAs at sites C1 and C2. This Aspergillus oryzae (strain ATCC 42149 / RIB 40) (Yellow koji mold) protein is ATP-dependent rRNA helicase spb4.